Consider the following 429-residue polypeptide: Glutamate-1-semialdehyde 2,1-aminomutase (429 aa).

N6-(pyridoxal phosphate)lysine is present on Lys268.

The protein belongs to the class-III pyridoxal-phosphate-dependent aminotransferase family. HemL subfamily. In terms of assembly, homodimer. Pyridoxal 5'-phosphate is required as a cofactor.

It is found in the cytoplasm. The catalysed reaction is (S)-4-amino-5-oxopentanoate = 5-aminolevulinate. Its pathway is porphyrin-containing compound metabolism; protoporphyrin-IX biosynthesis; 5-aminolevulinate from L-glutamyl-tRNA(Glu): step 2/2. The protein is Glutamate-1-semialdehyde 2,1-aminomutase of Serratia proteamaculans (strain 568).